We begin with the raw amino-acid sequence, 317 residues long: 4-hydroxy-3-methylbut-2-enyl diphosphate reductase (317 aa).

Residue Cys-12 participates in [4Fe-4S] cluster binding. (2E)-4-hydroxy-3-methylbut-2-enyl diphosphate contacts are provided by His-41 and His-74. The dimethylallyl diphosphate site is built by His-41 and His-74. Isopentenyl diphosphate contacts are provided by His-41 and His-74. Cys-96 is a [4Fe-4S] cluster binding site. His-124 is a binding site for (2E)-4-hydroxy-3-methylbut-2-enyl diphosphate. Residue His-124 coordinates dimethylallyl diphosphate. His-124 provides a ligand contact to isopentenyl diphosphate. The Proton donor role is filled by Glu-126. Thr-168 is a (2E)-4-hydroxy-3-methylbut-2-enyl diphosphate binding site. Position 198 (Cys-198) interacts with [4Fe-4S] cluster. Residues Ser-226, Ser-227, Asn-228, and Ser-270 each contribute to the (2E)-4-hydroxy-3-methylbut-2-enyl diphosphate site. Ser-226, Ser-227, Asn-228, and Ser-270 together coordinate dimethylallyl diphosphate. Isopentenyl diphosphate-binding residues include Ser-226, Ser-227, Asn-228, and Ser-270.

It belongs to the IspH family. The cofactor is [4Fe-4S] cluster.

It catalyses the reaction isopentenyl diphosphate + 2 oxidized [2Fe-2S]-[ferredoxin] + H2O = (2E)-4-hydroxy-3-methylbut-2-enyl diphosphate + 2 reduced [2Fe-2S]-[ferredoxin] + 2 H(+). It carries out the reaction dimethylallyl diphosphate + 2 oxidized [2Fe-2S]-[ferredoxin] + H2O = (2E)-4-hydroxy-3-methylbut-2-enyl diphosphate + 2 reduced [2Fe-2S]-[ferredoxin] + 2 H(+). The protein operates within isoprenoid biosynthesis; dimethylallyl diphosphate biosynthesis; dimethylallyl diphosphate from (2E)-4-hydroxy-3-methylbutenyl diphosphate: step 1/1. It participates in isoprenoid biosynthesis; isopentenyl diphosphate biosynthesis via DXP pathway; isopentenyl diphosphate from 1-deoxy-D-xylulose 5-phosphate: step 6/6. Functionally, catalyzes the conversion of 1-hydroxy-2-methyl-2-(E)-butenyl 4-diphosphate (HMBPP) into a mixture of isopentenyl diphosphate (IPP) and dimethylallyl diphosphate (DMAPP). Acts in the terminal step of the DOXP/MEP pathway for isoprenoid precursor biosynthesis. This chain is 4-hydroxy-3-methylbut-2-enyl diphosphate reductase, found in Chromohalobacter salexigens (strain ATCC BAA-138 / DSM 3043 / CIP 106854 / NCIMB 13768 / 1H11).